We begin with the raw amino-acid sequence, 525 residues long: GMP synthase [glutamine-hydrolyzing] (525 aa).

The region spanning 9–207 is the Glutamine amidotransferase type-1 domain; that stretch reads RILILDFGSQ…VLDICRCTPL (199 aa). The Nucleophile role is filled by cysteine 86. Residues histidine 181 and glutamate 183 contribute to the active site. The GMPS ATP-PPase domain maps to 208–400; it reads WTPAKIIEDA…LGLPYDMLYR (193 aa). ATP is bound at residue 235–241; that stretch reads SGGVDSS.

As to quaternary structure, homodimer.

It catalyses the reaction XMP + L-glutamine + ATP + H2O = GMP + L-glutamate + AMP + diphosphate + 2 H(+). The protein operates within purine metabolism; GMP biosynthesis; GMP from XMP (L-Gln route): step 1/1. Catalyzes the synthesis of GMP from XMP. This is GMP synthase [glutamine-hydrolyzing] from Sodalis glossinidius (strain morsitans).